The sequence spans 67 residues: UPF0434 protein Tcr_0959 (67 aa).

It belongs to the UPF0434 family.

This Hydrogenovibrio crunogenus (strain DSM 25203 / XCL-2) (Thiomicrospira crunogena) protein is UPF0434 protein Tcr_0959.